The chain runs to 1231 residues: Cohesin subunit SA-2 (1231 aa).

At Met-1 the chain carries N-acetylmethionine. The disordered stretch occupies residues 1 to 75 (MIAAPEIPTD…GSNRMNGHHQ (75 aa)). Residues 36–48 (KQGKGKTCKKGKK) are compositionally biased toward basic residues. The region spanning 293–378 (FVHRYRDAIA…SRFKDRIVSM (86 aa)) is the SCD domain. Position 607 is an N6-acetyllysine (Lys-607). Phosphoserine occurs at positions 1058, 1061, 1064, and 1065. A disordered region spans residues 1062–1087 (GMSSRGSTVRSKKSKPSTGKRKVVEG). Basic residues predominate over residues 1071–1082 (RSKKSKPSTGKR). Phosphothreonine is present on Thr-1112. 2 positions are modified to phosphoserine: Ser-1177 and Ser-1178.

It belongs to the SCC3 family. In terms of assembly, interacts directly with RAD21 in cohesin complex. Cohesin complexes are composed of a heterodimer between a SMC1 protein (SMC1A or SMC1B) and SMC3, which are attached via their hinge domain, and RAD21 which link them at their heads, and one STAG protein (STAG1, STAG2 or STAG3). In cohesin complexes, STAG2 is mutually exclusive with STAG1 and STAG3. Phosphorylated by PLK1. The large dissociation of cohesin from chromosome arms during prophase is partly due to its phosphorylation.

It localises to the nucleus. The protein resides in the chromosome. It is found in the centromere. Component of cohesin complex, a complex required for the cohesion of sister chromatids after DNA replication. The cohesin complex apparently forms a large proteinaceous ring within which sister chromatids can be trapped. At anaphase, the complex is cleaved and dissociates from chromatin, allowing sister chromatids to segregate. The cohesin complex may also play a role in spindle pole assembly during mitosis. The chain is Cohesin subunit SA-2 (Stag2) from Mus musculus (Mouse).